Reading from the N-terminus, the 343-residue chain is Ribosomal RNA small subunit methyltransferase C (343 aa).

The protein belongs to the methyltransferase superfamily. RsmC family. Monomer.

It is found in the cytoplasm. It catalyses the reaction guanosine(1207) in 16S rRNA + S-adenosyl-L-methionine = N(2)-methylguanosine(1207) in 16S rRNA + S-adenosyl-L-homocysteine + H(+). Functionally, specifically methylates the guanine in position 1207 of 16S rRNA in the 30S particle. This is Ribosomal RNA small subunit methyltransferase C from Escherichia coli O17:K52:H18 (strain UMN026 / ExPEC).